Here is a 113-residue protein sequence, read N- to C-terminus: Ig heavy chain V-III region ABE-47N (113 aa).

The Ig-like domain maps to 1 to 113 (EVKLEESGGG…YWGQGTLVTV (113 aa)). Cys-22 and Cys-98 are disulfide-bonded.

The sequence is that of Ig heavy chain V-III region ABE-47N from Mus musculus (Mouse).